Here is a 201-residue protein sequence, read N- to C-terminus: Holliday junction branch migration complex subunit RuvA (201 aa).

Residues 1–63 (MIEYVRGELA…EDAYVLYGFA (63 aa)) are domain I. Positions 64 to 142 (DKQEREIFLL…TMGATVAGGS (79 aa)) are domain II. The segment at 143-151 (ASAGMLLQS) is flexible linker. The interval 152–201 (ASVEVQEEAVAALTMLGFAAAPSQKVVLAILKEEPDAPVEKVIKLALKRL) is domain III.

This sequence belongs to the RuvA family. Homotetramer. Forms an RuvA(8)-RuvB(12)-Holliday junction (HJ) complex. HJ DNA is sandwiched between 2 RuvA tetramers; dsDNA enters through RuvA and exits via RuvB. An RuvB hexamer assembles on each DNA strand where it exits the tetramer. Each RuvB hexamer is contacted by two RuvA subunits (via domain III) on 2 adjacent RuvB subunits; this complex drives branch migration. In the full resolvosome a probable DNA-RuvA(4)-RuvB(12)-RuvC(2) complex forms which resolves the HJ.

The protein resides in the cytoplasm. Its function is as follows. The RuvA-RuvB-RuvC complex processes Holliday junction (HJ) DNA during genetic recombination and DNA repair, while the RuvA-RuvB complex plays an important role in the rescue of blocked DNA replication forks via replication fork reversal (RFR). RuvA specifically binds to HJ cruciform DNA, conferring on it an open structure. The RuvB hexamer acts as an ATP-dependent pump, pulling dsDNA into and through the RuvAB complex. HJ branch migration allows RuvC to scan DNA until it finds its consensus sequence, where it cleaves and resolves the cruciform DNA. The sequence is that of Holliday junction branch migration complex subunit RuvA from Bacteroides thetaiotaomicron (strain ATCC 29148 / DSM 2079 / JCM 5827 / CCUG 10774 / NCTC 10582 / VPI-5482 / E50).